Reading from the N-terminus, the 856-residue chain is 3-hydroxy-3-methylglutaryl-coenzyme A reductase (856 aa).

4 helical membrane-spanning segments follow: residues 12–32 (FCAS…VCML), 89–109 (ILGI…SSVI), 123–143 (LFFF…QFAL), and 190–210 (VLCC…MTFY). A glycan (N-linked (GlcNAc...) asparagine) is linked at Asn326. The chain crosses the membrane as a helical span at residues 344 to 364 (SADHIVILILLLALAVKFVFF). Residues 365–443 (ETRDELTTTR…CEVMALVTSG (79 aa)) are linker. Residue Asn412 is glycosylated (N-linked (GlcNAc...) asparagine). The catalytic stretch occupies residues 443 to 771 (GHIAGYQLEK…SCTMPSIEIG (329 aa)). Active-site charge relay system residues include Glu528 and Lys659. N-linked (GlcNAc...) asparagine glycosylation is present at Asn700. Asp735 acts as the Charge relay system in catalysis. His834 functions as the Proton donor in the catalytic mechanism. Positions 836–856 (RHNRSSVSTSGSEPSTPACKS) are disordered. Residue Asn838 is glycosylated (N-linked (GlcNAc...) asparagine). Low complexity predominate over residues 840–856 (SSVSTSGSEPSTPACKS).

It belongs to the HMG-CoA reductase family.

Its subcellular location is the endoplasmic reticulum membrane. It catalyses the reaction (R)-mevalonate + 2 NADP(+) + CoA = (3S)-3-hydroxy-3-methylglutaryl-CoA + 2 NADPH + 2 H(+). The protein operates within metabolic intermediate biosynthesis; (R)-mevalonate biosynthesis; (R)-mevalonate from acetyl-CoA: step 3/3. Its activity is regulated as follows. The activity of HMG-CoA-reductase is suppressed by exogenous mevalonate. Functionally, synthesis of mevalonate for the production of non-sterol isoprenoids, which are essential for growth differentiation. This is 3-hydroxy-3-methylglutaryl-coenzyme A reductase from Blattella germanica (German cockroach).